A 345-amino-acid polypeptide reads, in one-letter code: Anthranilate phosphoribosyltransferase (345 aa).

5-phospho-alpha-D-ribose 1-diphosphate is bound by residues glycine 84, 87-88 (GD), threonine 92, 94-97 (NVTT), 112-120 (KHGNRSVSS), and serine 124. Glycine 84 is a binding site for anthranilate. Mg(2+) is bound at residue threonine 96. Asparagine 115 serves as a coordination point for anthranilate. Arginine 170 serves as a coordination point for anthranilate. Positions 228 and 229 each coordinate Mg(2+).

The protein belongs to the anthranilate phosphoribosyltransferase family. Homodimer. It depends on Mg(2+) as a cofactor.

It catalyses the reaction N-(5-phospho-beta-D-ribosyl)anthranilate + diphosphate = 5-phospho-alpha-D-ribose 1-diphosphate + anthranilate. It functions in the pathway amino-acid biosynthesis; L-tryptophan biosynthesis; L-tryptophan from chorismate: step 2/5. Its function is as follows. Catalyzes the transfer of the phosphoribosyl group of 5-phosphorylribose-1-pyrophosphate (PRPP) to anthranilate to yield N-(5'-phosphoribosyl)-anthranilate (PRA). This is Anthranilate phosphoribosyltransferase from Corynebacterium aurimucosum (strain ATCC 700975 / DSM 44827 / CIP 107346 / CN-1) (Corynebacterium nigricans).